A 286-amino-acid chain; its full sequence is Orotidine 5'-phosphate decarboxylase (286 aa).

Residues Asp-35, 57–59, 89–98, Tyr-239, and Arg-257 each bind substrate; these read KTH and DRKFADIGNT. Catalysis depends on Lys-91, which acts as the Proton donor.

This sequence belongs to the OMP decarboxylase family.

It catalyses the reaction orotidine 5'-phosphate + H(+) = UMP + CO2. It participates in pyrimidine metabolism; UMP biosynthesis via de novo pathway; UMP from orotate: step 2/2. The chain is Orotidine 5'-phosphate decarboxylase (URA3) from Yarrowia lipolytica (strain CLIB 122 / E 150) (Yeast).